The following is a 412-amino-acid chain: Palmitoyltransferase ZDHHC6 (412 aa).

The Cytoplasmic segment spans residues 1 to 24 (MNILSAIIVFENLHEVKRLFHWGP). A helical membrane pass occupies residues 25 to 45 (IIALTVIGVCSSMAILDSIIW). Topologically, residues 46–57 (YWPLDTTGGSIN) are lumenal. Residues 58-78 (FIMLINWTVLILYNYFNAMFV) form a helical membrane-spanning segment. Topologically, residues 79-143 (GPGYIPLEWK…NCCGHLNHAY (65 aa)) are cytoplasmic. One can recognise a DHHC domain in the interval 99 to 149 (QFCRLCQGYKAPRSHHCRKCNRCVMKMDHHCPWINNCCGHLNHAYFTSFLL). The active-site S-palmitoyl cysteine intermediate is Cys129. The helical transmembrane segment at 144–164 (FTSFLLLAPLGCIHAALIFIM) threads the bilayer. Topologically, residues 165–205 (TMYTQLYDRISFGWSSVKIDMSAARHIHHPIMPFSIAAFAA) are lumenal. Residues 206–226 (TLFALGLALGTTIAVGMLFFI) form a helical membrane-spanning segment. Residues 227 to 412 (QMKVILRNRT…NSTSEEKKEQ (186 aa)) are Cytoplasmic-facing. The region spanning 313 to 398 (QRSVEYRVVE…PRRCVEKCLY (86 aa)) is the SH3 domain. 3 S-palmitoyl cysteine lipidation sites follow: Cys328, Cys329, and Cys343. The short motif at 409-412 (KKEQ) is the Di-lysine motif element.

Belongs to the DHHC palmitoyltransferase family.

It is found in the endoplasmic reticulum membrane. The catalysed reaction is L-cysteinyl-[protein] + hexadecanoyl-CoA = S-hexadecanoyl-L-cysteinyl-[protein] + CoA. It carries out the reaction L-cysteinyl-[protein] + octadecanoyl-CoA = S-octadecanoyl-L-cysteinyl-[protein] + CoA. In terms of biological role, endoplasmic reticulum palmitoyl acyltransferase that probably catalyzes the addition of palmitate onto various protein substrates and is involved in a variety of cellular processes. Could also function as a stearoyltransferase. This Danio rerio (Zebrafish) protein is Palmitoyltransferase ZDHHC6.